The sequence spans 512 residues: MWTILLTILIAGLLYRYVKRHYTHWQRLGVDEEPAKIPFGVMDTVMKQERSLGMALADIYARHEGKIVGIYMLNKRSILIRDAQLARQIMTSDFASFHDRGVYVDEDKDPLSANLFNLRGASWRNLRQKLTPSFSSGKIKGMFGTIDDVGDKLVQHLEGALDQSDEVEIKDVMTTYAVDIIGSVIFGLEIDSFRNPKNEFREISSSTSRDESLLLKIHNMSMFICPPIAKLMNRLGYESRILTSLRDMMKRTIEFREEHNVVRKDMLQLLIRLRNTGKIGEDDDQVWDMETAQEQLKSMSIEKIAAQAFLFYVAGSESTAAASAFTLYELSMYPELLKEAQEEVDAVLMKHNLKPKDRFTYEAVQDLKFLDICIMETIRKYPGLPFLNRECTEDYPVPGTNHIIAKGTPILISLFGMQRDPVYFPNPNGYDPHRFDSNNMNYDQAAYMPFGEGPRHCIALRMGKVNSKVAVAKILANFDLVQSPRKEVEFRFDAAPVLVTKEPLKLRLTKRK.

Cys457 lines the heme pocket.

This sequence belongs to the cytochrome P450 family. Heme is required as a cofactor.

It localises to the endoplasmic reticulum membrane. It is found in the microsome membrane. Its function is as follows. May be involved in the metabolism of insect hormones and in the breakdown of synthetic insecticides. This is Probable cytochrome P450 6d2 (Cyp6d2) from Drosophila melanogaster (Fruit fly).